The primary structure comprises 142 residues: Hemoglobin subunit pi (142 aa).

The Globin domain maps to 2–142 (TLTQAEKAAV…VSSVLTEKYR (141 aa)). 2 residues coordinate heme b: histidine 59 and histidine 88.

It belongs to the globin family.

The pi' chain is the counterpart of the alpha chain in the major early embryonic hemoglobin P. This is Hemoglobin subunit pi from Cairina moschata (Muscovy duck).